Consider the following 857-residue polypeptide: Leucine--tRNA ligase (857 aa).

Residues 42-52 carry the 'HIGH' region motif; sequence PYPSGTLHMGH. The short motif at 616–620 is the 'KMSKS' region element; sequence KMSKS. ATP is bound at residue K619.

This sequence belongs to the class-I aminoacyl-tRNA synthetase family.

The protein localises to the cytoplasm. The catalysed reaction is tRNA(Leu) + L-leucine + ATP = L-leucyl-tRNA(Leu) + AMP + diphosphate. This chain is Leucine--tRNA ligase, found in Parasynechococcus marenigrum (strain WH8102).